A 375-amino-acid chain; its full sequence is Alanine racemase (375 aa).

K38 serves as the catalytic Proton acceptor; specific for D-alanine. N6-(pyridoxal phosphate)lysine is present on K38. Residue R137 participates in substrate binding. Y266 functions as the Proton acceptor; specific for L-alanine in the catalytic mechanism. M314 serves as a coordination point for substrate.

The protein belongs to the alanine racemase family. The cofactor is pyridoxal 5'-phosphate.

It catalyses the reaction L-alanine = D-alanine. The protein operates within amino-acid biosynthesis; D-alanine biosynthesis; D-alanine from L-alanine: step 1/1. Its function is as follows. Catalyzes the interconversion of L-alanine and D-alanine. May also act on other amino acids. The protein is Alanine racemase (alr) of Cutibacterium acnes (strain DSM 16379 / KPA171202) (Propionibacterium acnes).